Consider the following 193-residue polypeptide: Peptide deformylase 2 (193 aa).

2 residues coordinate Fe cation: Cys-100 and His-142. Glu-143 is a catalytic residue. His-146 contributes to the Fe cation binding site.

Belongs to the polypeptide deformylase family. Requires Fe(2+) as cofactor.

It carries out the reaction N-terminal N-formyl-L-methionyl-[peptide] + H2O = N-terminal L-methionyl-[peptide] + formate. Functionally, removes the formyl group from the N-terminal Met of newly synthesized proteins. Requires at least a dipeptide for an efficient rate of reaction. N-terminal L-methionine is a prerequisite for activity but the enzyme has broad specificity at other positions. In Corynebacterium efficiens (strain DSM 44549 / YS-314 / AJ 12310 / JCM 11189 / NBRC 100395), this protein is Peptide deformylase 2.